Reading from the N-terminus, the 373-residue chain is SWI/SNF-related matrix-associated actin-dependent regulator of chromatin subfamily B member 1-A (373 aa).

The interval 1-101 (MALSKTYGQK…DEKYKAVSIS (101 aa)) is DNA-binding.

The protein belongs to the SNF5 family. In terms of assembly, component of the multiprotein chromatin-remodeling complexes SWI/SNF. Component of neural progenitors-specific chromatin remodeling complex (npBAF complex) and the neuron-specific chromatin remodeling complex (nBAF complex). Component of the BAF (SWI/SNF) chromatin remodeling complex. Component of the SWI/SNF-B (PBAF) chromatin remodeling complex. Binds to double-stranded DNA.

The protein resides in the nucleus. Involved in chromatin-remodeling. Core component of the BAF (SWI/SNF) complex. This ATP-dependent chromatin-remodeling complex plays important roles in cell proliferation and differentiation, in cellular antiviral activities and inhibition of tumor formation. Belongs to the neural progenitors-specific chromatin remodeling complex (npBAF complex) and the neuron-specific chromatin remodeling complex (nBAF complex) and may play a role in neural development. The sequence is that of SWI/SNF-related matrix-associated actin-dependent regulator of chromatin subfamily B member 1-A (smarcb1a) from Danio rerio (Zebrafish).